Here is a 379-residue protein sequence, read N- to C-terminus: Alcohol dehydrogenase 1 (379 aa).

8 residues coordinate Zn(2+): C47, T49, H69, C99, C102, C105, C113, and C177. T49 and H69 together coordinate an alcohol. Residue T49 coordinates NAD(+). Residues 202–207, D226, R231, T272, V295, 295–297, F322, and R372 contribute to the NAD(+) site; these read GLGAVG and VGV.

Belongs to the zinc-containing alcohol dehydrogenase family. In terms of assembly, homodimer. Requires Zn(2+) as cofactor.

Its subcellular location is the cytoplasm. It catalyses the reaction a primary alcohol + NAD(+) = an aldehyde + NADH + H(+). It carries out the reaction a secondary alcohol + NAD(+) = a ketone + NADH + H(+). This is Alcohol dehydrogenase 1 (ADH1) from Hordeum vulgare (Barley).